A 259-amino-acid polypeptide reads, in one-letter code: 4-hydroxy-tetrahydrodipicolinate reductase (259 aa).

9–14 contacts NAD(+); sequence GANGRM. An NADP(+)-binding site is contributed by Arg37. NAD(+) is bound by residues 92-94 and 116-119; these read GTT and ASNM. Catalysis depends on His149, which acts as the Proton donor/acceptor. Residue His150 coordinates (S)-2,3,4,5-tetrahydrodipicolinate. Residue Lys153 is the Proton donor of the active site. 159-160 contributes to the (S)-2,3,4,5-tetrahydrodipicolinate binding site; it reads GT.

Belongs to the DapB family.

The protein localises to the cytoplasm. The catalysed reaction is (S)-2,3,4,5-tetrahydrodipicolinate + NAD(+) + H2O = (2S,4S)-4-hydroxy-2,3,4,5-tetrahydrodipicolinate + NADH + H(+). It catalyses the reaction (S)-2,3,4,5-tetrahydrodipicolinate + NADP(+) + H2O = (2S,4S)-4-hydroxy-2,3,4,5-tetrahydrodipicolinate + NADPH + H(+). Its pathway is amino-acid biosynthesis; L-lysine biosynthesis via DAP pathway; (S)-tetrahydrodipicolinate from L-aspartate: step 4/4. Its function is as follows. Catalyzes the conversion of 4-hydroxy-tetrahydrodipicolinate (HTPA) to tetrahydrodipicolinate. This Desulfovibrio desulfuricans (strain ATCC 27774 / DSM 6949 / MB) protein is 4-hydroxy-tetrahydrodipicolinate reductase.